The sequence spans 303 residues: Phenoloxidase-activating factor 2 (303 aa).

Residues 1–24 (PDRRPPEDPITPPPPTKEEQRAGC) form a disordered region. The Peptidase S1 domain maps to 36–292 (IIGDKDGEAK…LRDWIDDKVA (257 aa)). 3 disulfide bridges follow: C173–C247, C206–C227, and C237–C268.

The protein belongs to the peptidase S1 family. Heterodimer.

Its subcellular location is the secreted. Functionally, binds and activates processed prophenoloxidases PPO1 and PPO2 and thus is involved in the activation of the prophenoloxidase cascade probably following the recognition of pathogen-derived products. Binds the A.niger cell wall component alpha-1,3-glucan, a fungal pathogen-associated molecular pattern (PAMP) that activates the host immune response. In Galleria mellonella (Greater wax moth), this protein is Phenoloxidase-activating factor 2 (LOC113510063).